A 285-amino-acid chain; its full sequence is MAVQVISGTELAKKTKSEVAGQIRRYISLGRRVPGLAVILVGSDPASQVYVGSKRKSCAEIGIDSKSYDLPETTTEAELLSIIDDLNRNPNVDGILVQLPLPKHIDSTKVIERIAPNKDVDGFHPYNVGRLCQRIPTLRACTPYGIMKLLETTGQDLHGLHAVIVGASNIVGRPMAMELLLAGCTVTVTHRFTRDLEEHVRRADILVVAVGKAEFINGDWIKPGATVIDVGINRGEDGKLRGDVQYAKAAEKAAFITPVPGGVGPMTVAMLMVNTLTAYERHFNA.

NADP(+)-binding positions include 166 to 168 (GAS) and Ile232.

Belongs to the tetrahydrofolate dehydrogenase/cyclohydrolase family. As to quaternary structure, homodimer.

The catalysed reaction is (6R)-5,10-methylene-5,6,7,8-tetrahydrofolate + NADP(+) = (6R)-5,10-methenyltetrahydrofolate + NADPH. The enzyme catalyses (6R)-5,10-methenyltetrahydrofolate + H2O = (6R)-10-formyltetrahydrofolate + H(+). Its pathway is one-carbon metabolism; tetrahydrofolate interconversion. In terms of biological role, catalyzes the oxidation of 5,10-methylenetetrahydrofolate to 5,10-methenyltetrahydrofolate and then the hydrolysis of 5,10-methenyltetrahydrofolate to 10-formyltetrahydrofolate. The polypeptide is Bifunctional protein FolD (Actinobacillus succinogenes (strain ATCC 55618 / DSM 22257 / CCUG 43843 / 130Z)).